The sequence spans 369 residues: Developmentally-regulated G-protein 3 (369 aa).

In terms of domain architecture, OBG-type G spans 66-291 (SRVGLVGFPS…LLDKIWEYLD (226 aa)). Residues 72–79 (GFPSVGKS), 118–122 (DLPGI), and 249–252 (NKID) each bind GTP. A TGS domain is found at 291-367 (DLTRIYTKPK…EDEDVVQIVK (77 aa)).

This sequence belongs to the TRAFAC class OBG-HflX-like GTPase superfamily. OBG GTPase family.

Its function is as follows. Binds GDP and GTP, and has low GTPase activity in vitro. This is Developmentally-regulated G-protein 3 (DRG3) from Arabidopsis thaliana (Mouse-ear cress).